Consider the following 46-residue polypeptide: AVPAGTLSPLQMESLREVCEVNVACDEMADTAGIVAAYTXFYGPVP.

One can recognise a Gla domain in the interval 1–43 (AVPAGTLSPLQMESLREVCEVNVACDEMADTAGIVAAYTXFYG). Thr-6 carries the post-translational modification Phosphothreonine. The Ca(2+) site is built by Glu-13, Glu-17, Glu-20, and Asp-26. 3 positions are modified to 4-carboxyglutamate: Glu-13, Glu-17, and Glu-20. A disulfide bridge connects residues Cys-19 and Cys-25. Glu-27 carries the post-translational modification 4-carboxyglutamate.

The protein belongs to the osteocalcin/matrix Gla protein family. In terms of processing, gamma-carboxyglutamate residues are formed by vitamin K dependent carboxylation by GGCX. These residues are essential for the binding of calcium.

The protein resides in the secreted. In terms of biological role, the carboxylated form is one of the main organic components of the bone matrix, which constitutes 1-2% of the total bone protein. The carboxylated form binds strongly to apatite and calcium. The polypeptide is Osteocalcin 2 (Solea senegalensis (Senegalese sole)).